We begin with the raw amino-acid sequence, 291 residues long: tRNA U34 carboxymethyltransferase (291 aa).

Residues Lys61, Trp75, Lys80, Gly100, 122 to 124 (DPS), Tyr169, and Arg284 each bind carboxy-S-adenosyl-L-methionine.

The protein belongs to the class I-like SAM-binding methyltransferase superfamily. CmoB family. Homotetramer.

It catalyses the reaction carboxy-S-adenosyl-L-methionine + 5-hydroxyuridine(34) in tRNA = 5-carboxymethoxyuridine(34) in tRNA + S-adenosyl-L-homocysteine + H(+). Catalyzes carboxymethyl transfer from carboxy-S-adenosyl-L-methionine (Cx-SAM) to 5-hydroxyuridine (ho5U) to form 5-carboxymethoxyuridine (cmo5U) at position 34 in tRNAs. The polypeptide is tRNA U34 carboxymethyltransferase (Campylobacter lari (strain RM2100 / D67 / ATCC BAA-1060)).